Here is an 88-residue protein sequence, read N- to C-terminus: MPNIKSAIKRVEITKARTIRNASIKSAVKTAIRRYEEALAKADKEVAETALRNAMVAVDKAVTKGVLHKNAAARKKSRLTKRFNKIAG.

Belongs to the bacterial ribosomal protein bS20 family.

Binds directly to 16S ribosomal RNA. The sequence is that of Small ribosomal subunit protein bS20 from Desulforamulus reducens (strain ATCC BAA-1160 / DSM 100696 / MI-1) (Desulfotomaculum reducens).